A 260-amino-acid chain; its full sequence is Indole-3-glycerol phosphate synthase (260 aa).

This sequence belongs to the TrpC family.

It catalyses the reaction 1-(2-carboxyphenylamino)-1-deoxy-D-ribulose 5-phosphate + H(+) = (1S,2R)-1-C-(indol-3-yl)glycerol 3-phosphate + CO2 + H2O. The protein operates within amino-acid biosynthesis; L-tryptophan biosynthesis; L-tryptophan from chorismate: step 4/5. The protein is Indole-3-glycerol phosphate synthase of Neisseria meningitidis serogroup C / serotype 2a (strain ATCC 700532 / DSM 15464 / FAM18).